The primary structure comprises 95 residues: UPF0473 protein BPUM_2377 (95 aa).

The protein belongs to the UPF0473 family.

The sequence is that of UPF0473 protein BPUM_2377 from Bacillus pumilus (strain SAFR-032).